Reading from the N-terminus, the 421-residue chain is Zinc finger protein 57 (421 aa).

The KRAB domain occupies 15 to 88; sequence VSYEDVAVSF…SCTGVFKGGP (74 aa). The C2H2-type 1; degenerate zinc-finger motif lies at 90 to 113; sequence FFCLTCGKCFKKNTFLFNHQFPVR. 2 consecutive C2H2-type zinc fingers follow at residues 140 to 162 and 168 to 190; these read FFCN…RRAH and RSCP…LKVH. The interval 191–221 is disordered; that stretch reads QNKPAASNQAGNQASNQRLKSRVPPTTPRSQ. A compositionally biased stretch (low complexity) spans 195–207; it reads AASNQAGNQASNQ. Residues 264–286 form a C2H2-type 4 zinc finger; that stretch reads ISCPYCHITFTMRTCLLTHLKIH. A C2H2-type 5; degenerate zinc finger spans residues 313 to 332; that stretch reads YTCPVCDSSFRGKESLLDHL. The interval 371–421 is disordered; the sequence is GKRMESRRRRRKRACTENPETEGLSGKGRVAPWEMEGATSPESPVTEEDSD.

Belongs to the krueppel C2H2-type zinc-finger protein family. In terms of tissue distribution, expressed in oocytes and in a subset of adult tissues. Expressed at high levels in testis, and at low levels in cerebellum. Present in sciatic nerve and spinal cord (at protein level).

The protein resides in the nucleus. Its function is as follows. Transcription regulator required to maintain maternal and paternal gene imprinting, a process by which gene expression is restricted in a parent of origin-specific manner by epigenetic modification of genomic DNA and chromatin, including DNA methylation. Acts by controlling DNA methylation during the earliest multicellular stages of development at multiple imprinting control regions (ICRs). Acts together with ZNF445, but ZFP57 plays the predominant role in imprinting maintenance. In contrast, in humans, ZNF445 seems to be the major factor early embryonic imprinting maintenance. Required for the establishment of maternal methylation imprints at SNRPN locus. Acts as a transcriptional repressor in Schwann cells. Binds to a 5'-TGCCGC-3' consensus sequence and recognizes the methylated CpG within this element. The protein is Zinc finger protein 57 (Zfp57) of Mus musculus (Mouse).